Consider the following 150-residue polypeptide: Small ribosomal subunit protein uS15 (150 aa).

Residues 1–22 (MNKRREKGQSHSTRPPHPQPPQ) are disordered.

The protein belongs to the universal ribosomal protein uS15 family. As to quaternary structure, part of the 30S ribosomal subunit.

This chain is Small ribosomal subunit protein uS15, found in Aeropyrum pernix (strain ATCC 700893 / DSM 11879 / JCM 9820 / NBRC 100138 / K1).